Consider the following 194-residue polypeptide: Thymidine kinase (194 aa).

ATP is bound by residues Gly-15–Thr-22 and Asp-88–His-91. Glu-89 functions as the Proton acceptor in the catalytic mechanism. Positions 148, 151, 186, and 189 each coordinate Zn(2+).

The protein belongs to the thymidine kinase family. As to quaternary structure, homotetramer.

Its subcellular location is the cytoplasm. It catalyses the reaction thymidine + ATP = dTMP + ADP + H(+). In Roseiflexus castenholzii (strain DSM 13941 / HLO8), this protein is Thymidine kinase.